A 535-amino-acid chain; its full sequence is CTP synthase (535 aa).

An amidoligase domain region spans residues 1–268 (MSTKYIFVTG…DQIVCDHLKL (268 aa)). Ser-14 is a CTP binding site. Residue Ser-14 coordinates UTP. 15–20 (SIGKGI) contributes to the ATP binding site. Tyr-55 is an L-glutamine binding site. An ATP-binding site is contributed by Asp-72. Asp-72 and Glu-142 together coordinate Mg(2+). CTP is bound by residues 149 to 151 (DIE), 189 to 194 (KTKPTQ), and Lys-225. Residues 189–194 (KTKPTQ) and Lys-225 each bind UTP. The Glutamine amidotransferase type-1 domain occupies 293-535 (KISLVGKYVE…FVTAAVENSN (243 aa)). Gly-355 provides a ligand contact to L-glutamine. Catalysis depends on Cys-382, which acts as the Nucleophile; for glutamine hydrolysis. L-glutamine is bound by residues 383–386 (LGMQ), Glu-406, and Arg-464. Active-site residues include His-509 and Glu-511.

This sequence belongs to the CTP synthase family. Homotetramer.

It carries out the reaction UTP + L-glutamine + ATP + H2O = CTP + L-glutamate + ADP + phosphate + 2 H(+). The enzyme catalyses L-glutamine + H2O = L-glutamate + NH4(+). The catalysed reaction is UTP + NH4(+) + ATP = CTP + ADP + phosphate + 2 H(+). It functions in the pathway pyrimidine metabolism; CTP biosynthesis via de novo pathway; CTP from UDP: step 2/2. Allosterically activated by GTP, when glutamine is the substrate; GTP has no effect on the reaction when ammonia is the substrate. The allosteric effector GTP functions by stabilizing the protein conformation that binds the tetrahedral intermediate(s) formed during glutamine hydrolysis. Inhibited by the product CTP, via allosteric rather than competitive inhibition. In terms of biological role, catalyzes the ATP-dependent amination of UTP to CTP with either L-glutamine or ammonia as the source of nitrogen. Regulates intracellular CTP levels through interactions with the four ribonucleotide triphosphates. This Streptococcus pneumoniae (strain ATCC BAA-255 / R6) protein is CTP synthase.